Reading from the N-terminus, the 147-residue chain is D-aminoacyl-tRNA deacylase (147 aa).

The Gly-cisPro motif, important for rejection of L-amino acids motif lies at 137 to 138; sequence GP.

This sequence belongs to the DTD family. Homodimer.

It localises to the cytoplasm. It catalyses the reaction glycyl-tRNA(Ala) + H2O = tRNA(Ala) + glycine + H(+). The enzyme catalyses a D-aminoacyl-tRNA + H2O = a tRNA + a D-alpha-amino acid + H(+). An aminoacyl-tRNA editing enzyme that deacylates mischarged D-aminoacyl-tRNAs. Also deacylates mischarged glycyl-tRNA(Ala), protecting cells against glycine mischarging by AlaRS. Acts via tRNA-based rather than protein-based catalysis; rejects L-amino acids rather than detecting D-amino acids in the active site. By recycling D-aminoacyl-tRNA to D-amino acids and free tRNA molecules, this enzyme counteracts the toxicity associated with the formation of D-aminoacyl-tRNA entities in vivo and helps enforce protein L-homochirality. The sequence is that of D-aminoacyl-tRNA deacylase from Levilactobacillus brevis (strain ATCC 367 / BCRC 12310 / CIP 105137 / JCM 1170 / LMG 11437 / NCIMB 947 / NCTC 947) (Lactobacillus brevis).